The chain runs to 189 residues: Adenylate kinase (189 aa).

10–15 (AAGKGT) contacts ATP. Positions 30–59 (STGDMLRAARASGSELGQRVAKIMDEGGLV) are NMP. Residues threonine 31, arginine 36, 57-59 (GLV), 85-88 (GFPR), and glutamine 92 contribute to the AMP site. Residues 126–136 (KRFEEQGRADD) are LID. Residue arginine 127 coordinates ATP. Positions 133 and 144 each coordinate AMP. An ATP-binding site is contributed by glycine 172.

It belongs to the adenylate kinase family. Monomer.

The protein localises to the cytoplasm. The enzyme catalyses AMP + ATP = 2 ADP. It participates in purine metabolism; AMP biosynthesis via salvage pathway; AMP from ADP: step 1/1. Functionally, catalyzes the reversible transfer of the terminal phosphate group between ATP and AMP. Plays an important role in cellular energy homeostasis and in adenine nucleotide metabolism. The chain is Adenylate kinase from Hyphomonas neptunium (strain ATCC 15444).